The chain runs to 423 residues: Major royal jelly protein 9 (423 aa).

The N-terminal stretch at 1–20 is a signal peptide; the sequence is MSFNIWWLILYFSIVCQAKA. Asn-110, Asn-118, Asn-177, Asn-196, and Asn-345 each carry an N-linked (GlcNAc...) asparagine glycan.

It belongs to the major royal jelly protein family. In terms of tissue distribution, expressed at very low levels in the hypopharyngeal glands of adult worker bees (at protein level); expression peaks at 12 days post eclosion. Secreted into bee venom in the sting apparatus (at protein level). Expressed in the brains of adult worker bees peaking at 12 days post eclosion (at protein level). Expressed in the spermatheca of adult queen bees (at protein level); expression levels are higher in mated queens than in virgin queens. Along with Mrjp8 expressed at very low levels in the head of worker bees compared to other major royal jelly proteins.

It is found in the secreted. Its function is as follows. Component of bee sting venom. Component of royal jelly, a substance produced in the hypopharyngeal gland containing proteins, free amino acids, fatty acids, sugars and other nutrients, which is fed to developing larvae by worker nurse bees; may be present only at trace levels. All larvae are fed some royal jelly (also known as worker jelly) early in their development but it forms the principal source of nutrition for larvae destined to become queen bees. Produced in the spermatheca of adult queen bees, along with other major royal jelly proteins, where it may act as a nutrient supply for sperm stored by mated queens, or be involved in energy metabolism. The polypeptide is Major royal jelly protein 9 (Apis mellifera (Honeybee)).